Reading from the N-terminus, the 160-residue chain is Cyclic pyranopterin monophosphate synthase (160 aa).

Substrate is bound by residues 77 to 79 and 114 to 115; these read MCH and ME. D129 is an active-site residue.

This sequence belongs to the MoaC family. In terms of assembly, homohexamer; trimer of dimers.

The enzyme catalyses (8S)-3',8-cyclo-7,8-dihydroguanosine 5'-triphosphate = cyclic pyranopterin phosphate + diphosphate. It participates in cofactor biosynthesis; molybdopterin biosynthesis. Functionally, catalyzes the conversion of (8S)-3',8-cyclo-7,8-dihydroguanosine 5'-triphosphate to cyclic pyranopterin monophosphate (cPMP). The sequence is that of Cyclic pyranopterin monophosphate synthase from Listeria innocua serovar 6a (strain ATCC BAA-680 / CLIP 11262).